Consider the following 410-residue polypeptide: UDP-N-acetylglucosamine--N-acetylmuramyl-(pentapeptide) pyrophosphoryl-undecaprenol N-acetylglucosamine transferase (410 aa).

The tract at residues 1 to 35 (MKDTVSQPAGGRGATAPRPADAASPSCGSSPSADS) is disordered. The span at 14-35 (ATAPRPADAASPSCGSSPSADS) shows a compositional bias: low complexity. UDP-N-acetyl-alpha-D-glucosamine contacts are provided by residues 45 to 47 (TAG), Asn-167, Arg-204, Ser-238, and Gln-334.

This sequence belongs to the glycosyltransferase 28 family. MurG subfamily.

The protein localises to the cell membrane. It catalyses the reaction di-trans,octa-cis-undecaprenyl diphospho-N-acetyl-alpha-D-muramoyl-L-alanyl-D-glutamyl-meso-2,6-diaminopimeloyl-D-alanyl-D-alanine + UDP-N-acetyl-alpha-D-glucosamine = di-trans,octa-cis-undecaprenyl diphospho-[N-acetyl-alpha-D-glucosaminyl-(1-&gt;4)]-N-acetyl-alpha-D-muramoyl-L-alanyl-D-glutamyl-meso-2,6-diaminopimeloyl-D-alanyl-D-alanine + UDP + H(+). It participates in cell wall biogenesis; peptidoglycan biosynthesis. Cell wall formation. Catalyzes the transfer of a GlcNAc subunit on undecaprenyl-pyrophosphoryl-MurNAc-pentapeptide (lipid intermediate I) to form undecaprenyl-pyrophosphoryl-MurNAc-(pentapeptide)GlcNAc (lipid intermediate II). The sequence is that of UDP-N-acetylglucosamine--N-acetylmuramyl-(pentapeptide) pyrophosphoryl-undecaprenol N-acetylglucosamine transferase from Mycobacterium tuberculosis (strain ATCC 25177 / H37Ra).